Reading from the N-terminus, the 389-residue chain is Arrestin-C (389 aa).

Belongs to the arrestin family. Retina and pineal gland.

Functionally, may play a role in an as yet undefined retina-specific signal transduction. Could bind to photoactivated-phosphorylated red/green opsins. The sequence is that of Arrestin-C (arr3) from Lithobates pipiens (Northern leopard frog).